The chain runs to 616 residues: Chaperone protein DnaK (616 aa).

Threonine 175 is modified (phosphothreonine; by autocatalysis). A disordered region spans residues 579–605 (GGDPSQAGGFDPNAAGGAQQAPHDDNV).

This sequence belongs to the heat shock protein 70 family.

Acts as a chaperone. The polypeptide is Chaperone protein DnaK (Clostridium botulinum (strain Alaska E43 / Type E3)).